The following is a 574-amino-acid chain: K(+)/H(+) antiporter NhaP2 (574 aa).

13 helical membrane-spanning segments follow: residues 6-26 (INSF…LSPM), 30-50 (LGIP…EDGL), 58-78 (YSTA…DGGM), 87-107 (VALW…TSIT), 109-129 (LMAA…GAIV), 173-193 (IAIL…VSFI), 196-216 (FGLG…LVNL), 219-239 (LAEG…YAVS), 242-262 (LGGS…NKPT), 271-291 (VLDG…GLLL), 299-319 (ILLP…PLAV), 335-355 (WFIS…VFPM), and 359-379 (LPGA…SLLI). Positions 405-486 (SGVEIYPSSE…LDALSHLFSQ (82 aa)) constitute an RCK C-terminal domain.

The protein belongs to the monovalent cation:proton antiporter 1 (CPA1) transporter (TC 2.A.36) family. NhaP2 subfamily.

It localises to the cell inner membrane. It catalyses the reaction K(+)(in) + H(+)(out) = K(+)(out) + H(+)(in). In terms of biological role, k(+)/H(+) antiporter that extrudes potassium in exchange for external protons and maintains the internal concentration of potassium under toxic levels. This chain is K(+)/H(+) antiporter NhaP2, found in Shewanella sp. (strain W3-18-1).